Consider the following 428-residue polypeptide: Ribosomal RNA small subunit methyltransferase B (428 aa).

S-adenosyl-L-methionine is bound by residues 253-259 (CAAPGGK), Asp276, Asp302, and Asp321. The active-site Nucleophile is Cys374.

The protein belongs to the class I-like SAM-binding methyltransferase superfamily. RsmB/NOP family.

The protein resides in the cytoplasm. The enzyme catalyses cytidine(967) in 16S rRNA + S-adenosyl-L-methionine = 5-methylcytidine(967) in 16S rRNA + S-adenosyl-L-homocysteine + H(+). Its function is as follows. Specifically methylates the cytosine at position 967 (m5C967) of 16S rRNA. The sequence is that of Ribosomal RNA small subunit methyltransferase B from Enterobacter sp. (strain 638).